A 547-amino-acid chain; its full sequence is Sodium-coupled neutral amino acid transporter 4 (547 aa).

The Extracellular portion of the chain corresponds to 1 to 104 (MDPIELRSVN…GLSYAMANTG (104 aa)). Phosphoserine is present on serine 49. A helical membrane pass occupies residues 105–125 (IVLFVIMLLTVAILSLYSVHL). At 126–151 (LLKTAKEGGSLIYEKLGEKAFGWPGK) the chain is on the cytoplasmic side. A helical membrane pass occupies residues 152–172 (IGAFISITMQNIGAMSSYLFI). Topologically, residues 173-195 (IKYELPEVIRVFMGLEENTGEWY) are extracellular. A helical membrane pass occupies residues 196–216 (LNGNYLVLFVSVGIILPLSLL). The Cytoplasmic portion of the chain corresponds to 217–220 (KNLG). The helical transmembrane segment at 221-241 (YLGYTSGFSLTCMVFFVSVVI) threads the bilayer. Over 242-332 (YKKFQIPCPL…PKYFVFNSRT (91 aa)) the chain is Extracellular. Cysteine 249 and cysteine 321 are disulfide-bonded. Residues asparagine 260, asparagine 264, and asparagine 276 are each glycosylated (N-linked (GlcNAc...) asparagine). The chain crosses the membrane as a helical span at residues 333–353 (AYAIPILAFAFVCHPEVLPIY). At 354-369 (SELKDRSRRKMQTVSN) the chain is on the cytoplasmic side. A helical membrane pass occupies residues 370–390 (ISITGMLVMYLLAALFGYLSF). The Extracellular portion of the chain corresponds to 391–411 (YGEVEDELLHAYSKVYTFDTA). A helical transmembrane segment spans residues 412-432 (LLMVRLAVLVAVTLTVPIVLF). Over 433–453 (PIRTSVITLLFPRRPFSWVKH) the chain is Cytoplasmic. The helical transmembrane segment at 454 to 474 (FGIAAIIIALNNVLVILVPTI) threads the bilayer. Topologically, residues 475–476 (KY) are extracellular. A helical transmembrane segment spans residues 477 to 497 (IFGFIGASSATMLIFILPAAF). The Cytoplasmic segment spans residues 498 to 514 (YLKLVKKEPLRSPQKIG). A helical transmembrane segment spans residues 515 to 535 (ALVFLVTGIIFMMGSMALIII). The Extracellular portion of the chain corresponds to 536-547 (DWIYNPPNPDHH).

It belongs to the amino acid/polyamine transporter 2 family. The disulfide bond plays an important role in substrate transport, but has no effect on trafficking to the cell surface. In terms of tissue distribution, expressed predominantly in liver, and at lower level in skeletal muscle.

It localises to the cell membrane. The protein localises to the cell projection. The protein resides in the microvillus membrane. It carries out the reaction L-alanine(in) + Na(+)(in) = L-alanine(out) + Na(+)(out). The enzyme catalyses L-serine(in) + Na(+)(in) = L-serine(out) + Na(+)(out). It catalyses the reaction glycine(in) + Na(+)(in) = glycine(out) + Na(+)(out). The catalysed reaction is L-cysteine(in) + Na(+)(in) = L-cysteine(out) + Na(+)(out). It carries out the reaction L-asparagine(in) + Na(+)(in) = L-asparagine(out) + Na(+)(out). The enzyme catalyses L-threonine(in) + Na(+)(in) = L-threonine(out) + Na(+)(out). It catalyses the reaction L-proline(in) + Na(+)(in) = L-proline(out) + Na(+)(out). The catalysed reaction is L-methionine(in) + Na(+)(in) = L-methionine(out) + Na(+)(out). It carries out the reaction L-glutamine(in) + Na(+)(in) = L-glutamine(out) + Na(+)(out). The enzyme catalyses L-histidine(in) + Na(+)(in) = L-histidine(out) + Na(+)(out). Symporter that cotransports neutral amino acids and sodium ions from the extraccellular to the intracellular side of the cell membrane. The transport is electrogenic, pH dependent and partially tolerates substitution of Na(+) by Li(+). Preferentially transports smaller amino acids, such as glycine, L-alanine, L-serine, L-asparagine and L-threonine, followed by L-cysteine, L-histidine, L-proline and L-glutamine and L-methionine. In Rattus norvegicus (Rat), this protein is Sodium-coupled neutral amino acid transporter 4.